The sequence spans 223 residues: Adenylate kinase 4, mitochondrial (223 aa).

15 to 20 (GSGKGT) provides a ligand contact to a ribonucleoside 5'-triphosphate. The interval 35–64 (SSGHLLRENLKTNTEVGDVAKQYLEKGLLV) is NMP. The AMP site is built by serine 36 and arginine 41. N6-succinyllysine is present on lysine 60. Residues 62–64 (LLV), 89–92 (GFPR), and glutamine 96 each bind AMP. An LID region spans residues 125–162 (RRWIHPSSGRVYNLDFNPPQVLGVDDITGEPLVQQEDD). Residues arginine 126 and 135–136 (VY) each bind a ribonucleoside 5'-triphosphate. Residue arginine 170 participates in AMP binding. The residue at position 175 (lysine 175) is an N6-acetyllysine. N6-acetyllysine; alternate is present on residues lysine 179 and lysine 186. 2 positions are modified to N6-succinyllysine; alternate: lysine 179 and lysine 186. Threonine 199 serves as a coordination point for a ribonucleoside 5'-triphosphate.

This sequence belongs to the adenylate kinase family. AK3 subfamily. In terms of assembly, monomer. Interacts with SLC25A5/ANT2. As to expression, expressed in the pyramidal cells in the hippocampus.

It localises to the mitochondrion matrix. It catalyses the reaction a ribonucleoside 5'-phosphate + ATP = a ribonucleoside 5'-diphosphate + ADP. The catalysed reaction is AMP + ATP = 2 ADP. It carries out the reaction GTP + AMP = GDP + ADP. The enzyme catalyses CMP + ATP = CDP + ADP. It catalyses the reaction GTP + CMP = CDP + GDP. The catalysed reaction is dAMP + ATP = dADP + ADP. It carries out the reaction dCMP + ATP = dCDP + ADP. The enzyme catalyses a 2'-deoxyribonucleoside 5'-diphosphate + ATP = a 2'-deoxyribonucleoside 5'-triphosphate + ADP. It catalyses the reaction a ribonucleoside 5'-diphosphate + ATP = a ribonucleoside 5'-triphosphate + ADP. The catalysed reaction is GDP + ATP = GTP + ADP. It carries out the reaction CDP + GTP = CTP + GDP. The enzyme catalyses CDP + ATP = CTP + ADP. It catalyses the reaction UDP + ATP = UTP + ADP. The catalysed reaction is GTP + UDP = UTP + GDP. It carries out the reaction dADP + GTP = dATP + GDP. The enzyme catalyses dCDP + GTP = dCTP + GDP. It catalyses the reaction dCDP + ATP = dCTP + ADP. The catalysed reaction is dGDP + ATP = dGTP + ADP. It carries out the reaction dTDP + GTP = dTTP + GDP. The enzyme catalyses dTDP + ATP = dTTP + ADP. Functionally, broad-specificity mitochondrial nucleoside phosphate kinase involved in cellular nucleotide homeostasis by catalyzing nucleoside-phosphate interconversions. Similar to other adenylate kinases, preferentially catalyzes the phosphorylation of the nucleoside monophosphate AMP with ATP as phosphate donor to produce ADP. Phosphorylates only AMP when using GTP as phosphate donor. In vitro, can also catalyze the phosphorylation of CMP, dAMP and dCMP and use GTP as an alternate phosphate donor. Moreover, exhibits a diphosphate kinase activity, producing ATP, CTP, GTP, UTP, TTP, dATP, dCTP and dGTP from the corresponding diphosphate substrates with either ATP or GTP as phosphate donors. Plays a role in controlling cellular ATP levels by regulating phosphorylation and activation of the energy sensor protein kinase AMPK. Plays a protective role in the cellular response to oxidative stress. This chain is Adenylate kinase 4, mitochondrial, found in Rattus norvegicus (Rat).